Reading from the N-terminus, the 369-residue chain is CASP-like protein 4U1 (369 aa).

The interval 1–162 is disordered; that stretch reads MASTPRTPAP…RAETKLPLSS (162 aa). The Cytoplasmic segment spans residues 1–222; the sequence is MASTPRTPAP…AVAAVAERRE (222 aa). The segment covering 7-23 has biased composition (pro residues); sequence TPAPERSPPPVPTPPPP. Residues 36–51 show a composition bias toward basic and acidic residues; the sequence is SPREEASFSSDGREGA. Low complexity-rich tracts occupy residues 87-96 and 114-127; these read ANKAAAATAE and SSQT…SPTP. Residues 223 to 243 form a helical membrane-spanning segment; it reads LLLALRLATAVLSLAAFSVIA. At 244–262 the chain is on the extracellular side; it reads SARTSGWAGDYYARHLQYR. Residues 263–283 traverse the membrane as a helical segment; it reads YAVAVNVIVFAYSVAQSLGKI. Residues 284 to 300 are Cytoplasmic-facing; sequence RHLVSPRFTFRTMSSYY. A helical membrane pass occupies residues 301-321; that stretch reads CSLFLDQVLAYLLMSASSAAA. Residues 322 to 339 are Extracellular-facing; sequence SRNDLWVSRFGTDAFVRK. The helical transmembrane segment at 340–360 threads the bilayer; the sequence is ITGALWLSFVAFLVLALNAVI. Topologically, residues 361–369 are cytoplasmic; it reads SXANLFSMV.

The protein belongs to the Casparian strip membrane proteins (CASP) family. As to quaternary structure, homodimer and heterodimers.

It is found in the cell membrane. This chain is CASP-like protein 4U1, found in Zea mays (Maize).